Consider the following 255-residue polypeptide: 5'-nucleotidase SurE (255 aa).

Residues aspartate 8, aspartate 9, serine 39, and asparagine 95 each contribute to the a divalent metal cation site.

The protein belongs to the SurE nucleotidase family. The cofactor is a divalent metal cation.

The protein localises to the cytoplasm. It catalyses the reaction a ribonucleoside 5'-phosphate + H2O = a ribonucleoside + phosphate. In terms of biological role, nucleotidase that shows phosphatase activity on nucleoside 5'-monophosphates. This Herpetosiphon aurantiacus (strain ATCC 23779 / DSM 785 / 114-95) protein is 5'-nucleotidase SurE.